Here is a 239-residue protein sequence, read N- to C-terminus: tRNA (guanine-N(7)-)-methyltransferase (239 aa).

S-adenosyl-L-methionine-binding residues include Glu68, Glu93, Asp120, and Asp143. Residue Asp143 is part of the active site. Residues Lys147, Asp180, and 217 to 220 contribute to the substrate site; that span reads TKFE.

This sequence belongs to the class I-like SAM-binding methyltransferase superfamily. TrmB family.

It catalyses the reaction guanosine(46) in tRNA + S-adenosyl-L-methionine = N(7)-methylguanosine(46) in tRNA + S-adenosyl-L-homocysteine. It functions in the pathway tRNA modification; N(7)-methylguanine-tRNA biosynthesis. Its function is as follows. Catalyzes the formation of N(7)-methylguanine at position 46 (m7G46) in tRNA. This chain is tRNA (guanine-N(7)-)-methyltransferase, found in Vibrio cholerae serotype O1 (strain ATCC 39541 / Classical Ogawa 395 / O395).